Reading from the N-terminus, the 76-residue chain is Translational regulator CsrA (76 aa).

The protein belongs to the CsrA/RsmA family. Homodimer; the beta-strands of each monomer intercalate to form a hydrophobic core, while the alpha-helices form wings that extend away from the core.

The protein resides in the cytoplasm. Functionally, a translational regulator that binds mRNA to regulate translation initiation and/or mRNA stability. Usually binds in the 5'-UTR at or near the Shine-Dalgarno sequence preventing ribosome-binding, thus repressing translation. Its main target seems to be the major flagellin gene, while its function is anatagonized by FliW. This Syntrophomonas wolfei subsp. wolfei (strain DSM 2245B / Goettingen) protein is Translational regulator CsrA.